We begin with the raw amino-acid sequence, 288 residues long: ATP synthase gamma chain (288 aa).

The protein belongs to the ATPase gamma chain family. In terms of assembly, F-type ATPases have 2 components, CF(1) - the catalytic core - and CF(0) - the membrane proton channel. CF(1) has five subunits: alpha(3), beta(3), gamma(1), delta(1), epsilon(1). CF(0) has three main subunits: a, b and c.

It is found in the cell inner membrane. Its function is as follows. Produces ATP from ADP in the presence of a proton gradient across the membrane. The gamma chain is believed to be important in regulating ATPase activity and the flow of protons through the CF(0) complex. The protein is ATP synthase gamma chain of Acidithiobacillus ferrooxidans (strain ATCC 23270 / DSM 14882 / CIP 104768 / NCIMB 8455) (Ferrobacillus ferrooxidans (strain ATCC 23270)).